A 362-amino-acid polypeptide reads, in one-letter code: Peptide chain release factor 1 (362 aa).

Residue glutamine 238 is modified to N5-methylglutamine.

The protein belongs to the prokaryotic/mitochondrial release factor family. In terms of processing, methylated by PrmC. Methylation increases the termination efficiency of RF1.

The protein resides in the cytoplasm. In terms of biological role, peptide chain release factor 1 directs the termination of translation in response to the peptide chain termination codons UAG and UAA. The chain is Peptide chain release factor 1 from Psychrobacter arcticus (strain DSM 17307 / VKM B-2377 / 273-4).